Reading from the N-terminus, the 87-residue chain is UPF0250 protein BUAPTUC7_482 (87 aa).

The protein belongs to the UPF0250 family.

The polypeptide is UPF0250 protein BUAPTUC7_482 (Buchnera aphidicola subsp. Acyrthosiphon pisum (strain Tuc7)).